Here is a 290-residue protein sequence, read N- to C-terminus: Lipoyl synthase 2 (290 aa).

Residues cysteine 37, cysteine 42, cysteine 48, cysteine 63, cysteine 67, cysteine 70, and serine 283 each coordinate [4Fe-4S] cluster. A Radical SAM core domain is found at tyrosine 49 to serine 272.

This sequence belongs to the radical SAM superfamily. Lipoyl synthase family. The cofactor is [4Fe-4S] cluster.

The protein resides in the cytoplasm. The catalysed reaction is [[Fe-S] cluster scaffold protein carrying a second [4Fe-4S](2+) cluster] + N(6)-octanoyl-L-lysyl-[protein] + 2 oxidized [2Fe-2S]-[ferredoxin] + 2 S-adenosyl-L-methionine + 4 H(+) = [[Fe-S] cluster scaffold protein] + N(6)-[(R)-dihydrolipoyl]-L-lysyl-[protein] + 4 Fe(3+) + 2 hydrogen sulfide + 2 5'-deoxyadenosine + 2 L-methionine + 2 reduced [2Fe-2S]-[ferredoxin]. The protein operates within protein modification; protein lipoylation via endogenous pathway; protein N(6)-(lipoyl)lysine from octanoyl-[acyl-carrier-protein]: step 2/2. In terms of biological role, catalyzes the radical-mediated insertion of two sulfur atoms into the C-6 and C-8 positions of the octanoyl moiety bound to the lipoyl domains of lipoate-dependent enzymes, thereby converting the octanoylated domains into lipoylated derivatives. The protein is Lipoyl synthase 2 of Thermosynechococcus vestitus (strain NIES-2133 / IAM M-273 / BP-1).